A 755-amino-acid polypeptide reads, in one-letter code: MAVDIKKIIKQMTLEEKAGLCSGLDFWHTKPVERLGIPSIMMTDGPHGLRKQREDAEIADINNSVPATCFPSAAGLACSWDRELVERVGAALGEECQAENVSILLGPGANIKRSPLCGRNFEYFSEDPYLSSELAASHIKGVQSQGVGACLKHFAANNQEHRRMTVDTIVDERTLREIYFASFENAVKKARPWVVMCAYNKLNGEYCSENRYLLTEVLKNEWMHDGFVVSDWGAVNDRVSGLDAGLDLEMPTSHGITDKKIVEAVKSGKLSENILNRAVERILKVIFMALENKKENAQYDKDAHHRLARQAAAESMVLLKNEDDVLPLKKSGTIALIGAFVKKPRYQGSGSSHITPTRLDDIYEEIKKAGGDKVNLVYSEGYRLENDGIDEELINEAKKAASSSDVAVVFAGLPDEYESEGFDRTHMSIPENQNRLIEAVAEVQSNIVVVLLNGSPVEMPWIDKVKSVLEAYLGGQALGGALADVLFGEVNPSGKLAETFPVKLSHNPSYLNFPGEDDRVEYKEGLFVGYRYYDTKGIEPLFPFGHGLSYTKFEYSDISVDKKDVSDNSIINVSVKVKNVGKMAGKEIVQLYVKDVKSSVRRPEKELKGFEKVFLNPGEEKTVTFTLDKRAFAYYNTQIKDWHVESGEFLILIGRSSRDIVLKESVRVNSTVKIRKRFTVNSAVEDVMSDSSAAAVLGPVLKEITDALQIDMDNAHDMMAANIKNMPLRSLVGYSQGRLSEEMLEELVDKINNVE.

The active site involves D231.

The protein belongs to the glycosyl hydrolase 3 family.

It carries out the reaction Hydrolysis of terminal, non-reducing beta-D-glucosyl residues with release of beta-D-glucose.. Its pathway is glycan metabolism; cellulose degradation. The protein is Thermostable beta-glucosidase B (bglB) of Acetivibrio thermocellus (strain ATCC 27405 / DSM 1237 / JCM 9322 / NBRC 103400 / NCIMB 10682 / NRRL B-4536 / VPI 7372) (Clostridium thermocellum).